The sequence spans 233 residues: Isoprenyl transferase (233 aa).

D12 is a catalytic residue. Position 12 (D12) interacts with Mg(2+). Substrate-binding positions include 13–16 (GNGR), W17, R25, H29, and 57–59 (STE). Residue N60 is the Proton acceptor of the active site. Residues W61, R63, R178, and 184–186 (RLS) contribute to the substrate site. Position 197 (E197) interacts with Mg(2+).

It belongs to the UPP synthase family. Homodimer. Mg(2+) serves as cofactor.

In terms of biological role, catalyzes the condensation of isopentenyl diphosphate (IPP) with allylic pyrophosphates generating different type of terpenoids. In Thermotoga maritima (strain ATCC 43589 / DSM 3109 / JCM 10099 / NBRC 100826 / MSB8), this protein is Isoprenyl transferase.